The sequence spans 78 residues: Large ribosomal subunit protein eL38 (78 aa).

Belongs to the eukaryotic ribosomal protein eL38 family.

The sequence is that of Large ribosomal subunit protein eL38 (RpL38) from Maconellicoccus hirsutus (Pink hibiscus mealybug).